Reading from the N-terminus, the 380-residue chain is O-phospho-L-seryl-tRNA:Cys-tRNA synthase (380 aa).

Residues 86–87 (AR), Asn-192, and 215–217 (SGH) contribute to the pyridoxal 5'-phosphate site. Lys-218 carries the post-translational modification N6-(pyridoxal phosphate)lysine.

Belongs to the SepCysS family. As to quaternary structure, homodimer. Interacts with SepRS. Requires pyridoxal 5'-phosphate as cofactor.

The enzyme catalyses O-phospho-L-seryl-tRNA(Cys) + hydrogen sulfide + H(+) = L-cysteinyl-tRNA(Cys) + phosphate. In terms of biological role, converts O-phospho-L-seryl-tRNA(Cys) (Sep-tRNA(Cys)) to L-cysteinyl-tRNA(Cys) (Cys-tRNA(Cys)). This Methanococcus maripaludis (strain C6 / ATCC BAA-1332) protein is O-phospho-L-seryl-tRNA:Cys-tRNA synthase.